A 633-amino-acid chain; its full sequence is DNA mismatch repair protein MutL (633 aa).

Belongs to the DNA mismatch repair MutL/HexB family.

Functionally, this protein is involved in the repair of mismatches in DNA. It is required for dam-dependent methyl-directed DNA mismatch repair. May act as a 'molecular matchmaker', a protein that promotes the formation of a stable complex between two or more DNA-binding proteins in an ATP-dependent manner without itself being part of a final effector complex. This is DNA mismatch repair protein MutL from Pseudomonas fluorescens (strain SBW25).